We begin with the raw amino-acid sequence, 209 residues long: D-aminoacyl-tRNA deacylase 1 (209 aa).

Positions 139–140 (GP) match the Gly-cisPro motif, important for rejection of L-amino acids motif. Positions 142 to 209 (TIELESPAPG…EGDVSSEREP (68 aa)) are disordered. Basic and acidic residues-rich tracts occupy residues 159–170 (QLSKLEKQQQRK) and 181–194 (SSKE…EDRS). A phosphoserine mark is found at S197, S204, and S205.

It belongs to the DTD family. In terms of assembly, homodimer. Interacts with CDC45 and TOPBP1. Preferentially phosphorylated in cells arrested early in S phase. Phosphorylation in the C-terminus weakens the interaction with CDC45.

Its subcellular location is the nucleus. It localises to the cytoplasm. The catalysed reaction is glycyl-tRNA(Ala) + H2O = tRNA(Ala) + glycine + H(+). It catalyses the reaction a D-aminoacyl-tRNA + H2O = a tRNA + a D-alpha-amino acid + H(+). An aminoacyl-tRNA editing enzyme that deacylates mischarged D-aminoacyl-tRNAs. Also deacylates mischarged glycyl-tRNA(Ala), protecting cells against glycine mischarging by AlaRS. Acts via tRNA-based rather than protein-based catalysis; rejects L-amino acids rather than detecting D-amino acids in the active site. By recycling D-aminoacyl-tRNA to D-amino acids and free tRNA molecules, this enzyme counteracts the toxicity associated with the formation of D-aminoacyl-tRNA entities in vivo and helps enforce protein L-homochirality. Its function is as follows. ATPase involved in DNA replication, may facilitate loading of CDC45 onto pre-replication complexes. The protein is D-aminoacyl-tRNA deacylase 1 (Dtd1) of Mus musculus (Mouse).